The chain runs to 171 residues: Tetratricopeptide repeat protein 9C (171 aa).

TPR repeat units lie at residues 8–41, 72–107, and 108–141; these read AQVY…LRGL, THCY…QPDN, and AKAL…QPKD.

The protein belongs to the TTC9 family.

This Mus musculus (Mouse) protein is Tetratricopeptide repeat protein 9C (Ttc9c).